We begin with the raw amino-acid sequence, 428 residues long: Light-independent protochlorophyllide reductase subunit N (428 aa).

The [4Fe-4S] cluster site is built by Cys-29, Cys-54, and Cys-115.

This sequence belongs to the BchN/ChlN family. In terms of assembly, protochlorophyllide reductase is composed of three subunits; BchL, BchN and BchB. Forms a heterotetramer of two BchB and two BchN subunits. [4Fe-4S] cluster serves as cofactor.

It catalyses the reaction chlorophyllide a + oxidized 2[4Fe-4S]-[ferredoxin] + 2 ADP + 2 phosphate = protochlorophyllide a + reduced 2[4Fe-4S]-[ferredoxin] + 2 ATP + 2 H2O. Its pathway is porphyrin-containing compound metabolism; bacteriochlorophyll biosynthesis (light-independent). In terms of biological role, component of the dark-operative protochlorophyllide reductase (DPOR) that uses Mg-ATP and reduced ferredoxin to reduce ring D of protochlorophyllide (Pchlide) to form chlorophyllide a (Chlide). This reaction is light-independent. The NB-protein (BchN-BchB) is the catalytic component of the complex. The protein is Light-independent protochlorophyllide reductase subunit N of Cereibacter sphaeroides (strain ATCC 17023 / DSM 158 / JCM 6121 / CCUG 31486 / LMG 2827 / NBRC 12203 / NCIMB 8253 / ATH 2.4.1.) (Rhodobacter sphaeroides).